A 1063-amino-acid chain; its full sequence is Integrin alpha-8 (1063 aa).

An N-terminal signal peptide occupies residues 1 to 38 (MSPGASRGPRGSQAPLIAPLCCAAAALGMLLWSPACQA). Over 39 to 1012 (FNLDVEKLTV…TPNVSFSIPL (974 aa)) the chain is Extracellular. FG-GAP repeat units follow at residues 44-105 (EKLT…GSAQ), 122-183 (NGTK…AYAE), 188-240 (RNSN…IANY), 253-306 (KQTE…STDM), 307-372 (TFIQ…LLFR), 373-431 (DPQI…GLNT), and 435-498 (QVLQ…LHPM). Asparagine 81 carries an N-linked (GlcNAc...) asparagine glycan. A disulfide bond links cysteine 96 and cysteine 106. N-linked (GlcNAc...) asparagine glycosylation occurs at asparagine 122. Cysteines 150 and 171 form a disulfide. An N-linked (GlcNAc...) asparagine glycan is attached at asparagine 177. A disulfide bond links cysteine 187 and cysteine 200. Asparagine 239 is a glycosylation site (N-linked (GlcNAc...) asparagine). 4 residues coordinate Ca(2+): glutamate 275, threonine 277, aspartate 279, and glutamate 283. N-linked (GlcNAc...) asparagine glycosylation is found at asparagine 302 and asparagine 311. Positions 329, 331, 333, 335, 337, 395, 397, 399, 401, and 403 each coordinate Ca(2+). Residues 455 to 457 (RGD) carry the Cell attachment site motif. Ca(2+)-binding residues include aspartate 459, aspartate 461, asparagine 463, tyrosine 465, and aspartate 467. N-linked (GlcNAc...) asparagine glycosylation occurs at asparagine 504. Disulfide bonds link cysteine 507–cysteine 518 and cysteine 524–cysteine 580. Asparagine 601 and asparagine 605 each carry an N-linked (GlcNAc...) asparagine glycan. 2 cysteine pairs are disulfide-bonded: cysteine 641-cysteine 647 and cysteine 713-cysteine 726. Asparagine 719, asparagine 737, asparagine 753, asparagine 780, asparagine 896, and asparagine 923 each carry an N-linked (GlcNAc...) asparagine glycan. Disulfide bonds link cysteine 867–cysteine 924 and cysteine 929–cysteine 934. A glycan (N-linked (GlcNAc...) asparagine) is linked at asparagine 1005. The chain crosses the membrane as a helical span at residues 1013-1033 (WVIILAILLGLLVLAILTLAL). Topologically, residues 1034–1063 (WKCGFFDRARPPQEDMTDREQLTNDKTPEA) are cytoplasmic.

It belongs to the integrin alpha chain family. As to quaternary structure, heterodimer of an alpha and a beta subunit. The alpha subunit is composed of a heavy and a light chain linked by a disulfide bond. Alpha-8 associates with beta-1. In terms of tissue distribution, expressed in mesenchymal cells, including alveolar myofibroblasts, kidney mesangial cells and hepatic stellar cells and vascular and visceral smooth muscle (at protein level).

It is found in the membrane. The protein localises to the cell membrane. Functionally, integrin alpha-8/beta-1 functions in the genesis of kidney and probably of other organs by regulating the recruitment of mesenchymal cells into epithelial structures. It recognizes the sequence R-G-D in a wide array of ligands including TNC, FN1, SPP1 TGFB1, TGFB3 and VTN. NPNT is probably its functional ligand in kidney genesis. Neuronal receptor for TNC it mediates cell-cell interactions and regulates neurite outgrowth of sensory and motor neurons. This chain is Integrin alpha-8 (ITGA8), found in Homo sapiens (Human).